The primary structure comprises 187 residues: MKMQANQIRPGQVLEHQGKRWTVLKIQLIQPGKGGAFIAVEMRDVDSGNKTNERWRTADTVERLEVREIDCQYLFKDDTGYTFMDKETFEQFSMAADALGEQAGFLQESMEVTVDCIEGSPVSVNLPSQVILQVVEADAVVKGQTASSSYKPGLLENGMKVMIPPFIEAGTRIVVSTVDCSYIERAK.

Belongs to the elongation factor P family.

The protein localises to the cytoplasm. Its pathway is protein biosynthesis; polypeptide chain elongation. In terms of biological role, involved in peptide bond synthesis. Stimulates efficient translation and peptide-bond synthesis on native or reconstituted 70S ribosomes in vitro. Probably functions indirectly by altering the affinity of the ribosome for aminoacyl-tRNA, thus increasing their reactivity as acceptors for peptidyl transferase. In Rhodospirillum rubrum (strain ATCC 11170 / ATH 1.1.1 / DSM 467 / LMG 4362 / NCIMB 8255 / S1), this protein is Elongation factor P.